Here is a 453-residue protein sequence, read N- to C-terminus: Bifunctional protein GlmU (453 aa).

Residues 1 to 225 (MNIVILAAGT…EWETLGVNSK (225 aa)) form a pyrophosphorylase region. Residues 6 to 9 (LAAG), Lys-20, Gln-71, 76 to 77 (GT), 98 to 100 (YGD), Gly-135, Glu-150, Asn-165, and Asn-223 contribute to the UDP-N-acetyl-alpha-D-glucosamine site. Asp-100 contributes to the Mg(2+) binding site. A Mg(2+)-binding site is contributed by Asn-223. Positions 226-246 (AQLAELERIHQRKLAEALLAD) are linker. Positions 247–453 (GVTLADPARI…GYVRPVKKKS (207 aa)) are N-acetyltransferase. Residues Arg-329 and Lys-347 each contribute to the UDP-N-acetyl-alpha-D-glucosamine site. The Proton acceptor role is filled by His-359. The UDP-N-acetyl-alpha-D-glucosamine site is built by Tyr-362 and Asn-373. Acetyl-CoA contacts are provided by residues Ala-376, 382-383 (NY), Ser-401, and Ala-419.

This sequence in the N-terminal section; belongs to the N-acetylglucosamine-1-phosphate uridyltransferase family. It in the C-terminal section; belongs to the transferase hexapeptide repeat family. Homotrimer. Requires Mg(2+) as cofactor.

It localises to the cytoplasm. The catalysed reaction is alpha-D-glucosamine 1-phosphate + acetyl-CoA = N-acetyl-alpha-D-glucosamine 1-phosphate + CoA + H(+). It carries out the reaction N-acetyl-alpha-D-glucosamine 1-phosphate + UTP + H(+) = UDP-N-acetyl-alpha-D-glucosamine + diphosphate. Its pathway is nucleotide-sugar biosynthesis; UDP-N-acetyl-alpha-D-glucosamine biosynthesis; N-acetyl-alpha-D-glucosamine 1-phosphate from alpha-D-glucosamine 6-phosphate (route II): step 2/2. It functions in the pathway nucleotide-sugar biosynthesis; UDP-N-acetyl-alpha-D-glucosamine biosynthesis; UDP-N-acetyl-alpha-D-glucosamine from N-acetyl-alpha-D-glucosamine 1-phosphate: step 1/1. The protein operates within bacterial outer membrane biogenesis; LPS lipid A biosynthesis. Its function is as follows. Catalyzes the last two sequential reactions in the de novo biosynthetic pathway for UDP-N-acetylglucosamine (UDP-GlcNAc). The C-terminal domain catalyzes the transfer of acetyl group from acetyl coenzyme A to glucosamine-1-phosphate (GlcN-1-P) to produce N-acetylglucosamine-1-phosphate (GlcNAc-1-P), which is converted into UDP-GlcNAc by the transfer of uridine 5-monophosphate (from uridine 5-triphosphate), a reaction catalyzed by the N-terminal domain. This chain is Bifunctional protein GlmU, found in Burkholderia thailandensis (strain ATCC 700388 / DSM 13276 / CCUG 48851 / CIP 106301 / E264).